Consider the following 812-residue polypeptide: Probable inorganic carbon transporter subunit DabA (812 aa).

C339, D341, H501, and C516 together coordinate Zn(2+).

It belongs to the inorganic carbon transporter (TC 9.A.2) DabA family. Forms a complex with DabB. Zn(2+) is required as a cofactor.

Its subcellular location is the cell inner membrane. In terms of biological role, part of an energy-coupled inorganic carbon pump. This is Probable inorganic carbon transporter subunit DabA from Xanthomonas axonopodis pv. citri (strain 306).